The primary structure comprises 280 residues: Putative pyruvate, phosphate dikinase regulatory protein (280 aa).

ADP is bound at residue 158–165 (GVSRTSKT).

It belongs to the pyruvate, phosphate/water dikinase regulatory protein family. PDRP subfamily.

It carries out the reaction N(tele)-phospho-L-histidyl/L-threonyl-[pyruvate, phosphate dikinase] + ADP = N(tele)-phospho-L-histidyl/O-phospho-L-threonyl-[pyruvate, phosphate dikinase] + AMP + H(+). It catalyses the reaction N(tele)-phospho-L-histidyl/O-phospho-L-threonyl-[pyruvate, phosphate dikinase] + phosphate + H(+) = N(tele)-phospho-L-histidyl/L-threonyl-[pyruvate, phosphate dikinase] + diphosphate. Its function is as follows. Bifunctional serine/threonine kinase and phosphorylase involved in the regulation of the pyruvate, phosphate dikinase (PPDK) by catalyzing its phosphorylation/dephosphorylation. In Lactobacillus johnsonii (strain CNCM I-12250 / La1 / NCC 533), this protein is Putative pyruvate, phosphate dikinase regulatory protein.